Consider the following 64-residue polypeptide: Insect toxin OsI1 (64 aa).

An LCN-type CS-alpha/beta domain is found at 1 to 61 (DGYPKQKDGC…MWKYETNTCG (61 aa)). Disulfide bonds link Cys10/Cys60, Cys14/Cys35, Cys21/Cys42, and Cys25/Cys44. Gly61 bears the Glycine amide mark.

Belongs to the long (4 C-C) scorpion toxin superfamily. Sodium channel inhibitor family. Beta subfamily. In terms of tissue distribution, expressed by the venom gland.

It localises to the secreted. Its function is as follows. Depressant insect beta-toxins cause a transient contraction paralysis followed by a slow flaccid paralysis. They bind voltage-independently at site-4 of sodium channels (Nav) and shift the voltage of activation toward more negative potentials thereby affecting sodium channel activation and promoting spontaneous and repetitive firing. This toxin is active only on insects. In Orthochirus scrobiculosus (Central Asian scorpion), this protein is Insect toxin OsI1.